We begin with the raw amino-acid sequence, 321 residues long: MISRHLQNNLMSVDPASSQAMELSDVTLIEGVGNEVMVVAGVVVLILALVLAWLSTYVADSGSNQLLGAIVSAGDTSVLHLGHVDHLVAGQGNPEPTELPHPSEGNDEKAEEAGEGRGDSTGEAGAGGGVEPSLEHLLDIQGLPKRQAGAGSSSPEAPLRSEDSTCLPPSPGLITVRLKFLNDTEELAVARPEDTVGALKSKYFPGQESQMKLIYQGRLLQDPARTLRSLNITDNCVIHCHRSPPGSAVPGPSASLAPSATEPPSLGVNVGSLMVPVFVVLLGVVWYFRINYRQFFTAPATVSLVGVTVFFSFLVFGMYGR.

The helical transmembrane segment at 36–56 (VMVVAGVVVLILALVLAWLST) threads the bilayer. Disordered regions lie at residues 87 to 131 (LVAG…GGVE) and 145 to 170 (KRQA…LPPS). The span at 104–120 (EGNDEKAEEAGEGRGDS) shows a compositional bias: basic and acidic residues. The 74-residue stretch at 174-247 (ITVRLKFLND…IHCHRSPPGS (74 aa)) folds into the Ubiquitin-like domain. Transmembrane regions (helical) follow at residues 266 to 286 (LGVN…GVVW) and 295 to 315 (FFTA…SFLV).

It localises to the membrane. The sequence is that of Transmembrane and ubiquitin-like domain-containing protein 2 (TMUB2) from Homo sapiens (Human).